Here is a 144-residue protein sequence, read N- to C-terminus: uncharacterized protein (144 aa).

Residues Leu25–Val47 traverse the membrane as a helical segment.

It localises to the membrane. This is an uncharacterized protein from Treponema pallidum (strain Nichols).